The primary structure comprises 346 residues: Actin-like protein 10 (346 aa).

Belongs to the actin family.

The polypeptide is Actin-like protein 10 (Actl10) (Mus musculus (Mouse)).